A 155-amino-acid chain; its full sequence is Small ribosomal subunit protein uS7 (155 aa).

It belongs to the universal ribosomal protein uS7 family. In terms of assembly, part of the 30S ribosomal subunit. Contacts proteins S9 and S11.

One of the primary rRNA binding proteins, it binds directly to 16S rRNA where it nucleates assembly of the head domain of the 30S subunit. Is located at the subunit interface close to the decoding center, probably blocks exit of the E-site tRNA. The protein is Small ribosomal subunit protein uS7 of Mesoplasma florum (strain ATCC 33453 / NBRC 100688 / NCTC 11704 / L1) (Acholeplasma florum).